Reading from the N-terminus, the 56-residue chain is Sex-specific storage protein 1 (56 aa).

This sequence belongs to the hemocyanin family. As to expression, expressed in fat body and ovary.

The protein localises to the secreted. Larval storage protein (LSP) which may serve as a store of amino acids for synthesis of adult proteins. The biosynthesis, accumulation and sequestration of storage protein-1 takes place during metamorphosis and saves energy for the non-feeding pupal stage. May also be essential for egg formation. In Amsacta albistriga (Red hairy caterpillar), this protein is Sex-specific storage protein 1.